The following is a 363-amino-acid chain: Putative lipoate-protein ligase A (363 aa).

In terms of domain architecture, BPL/LPL catalytic spans 49-229; the sequence is STAKHCLLLY…CFLLHKSHST (181 aa). ATP is bound by residues R91, 96-99, and K152; that span reads GTVF. (R)-lipoate is bound at residue K152.

Belongs to the LplA family. Monomer.

It is found in the cytoplasm. It catalyses the reaction L-lysyl-[lipoyl-carrier protein] + (R)-lipoate + ATP = N(6)-[(R)-lipoyl]-L-lysyl-[lipoyl-carrier protein] + AMP + diphosphate + H(+). Its pathway is protein modification; protein lipoylation via exogenous pathway; protein N(6)-(lipoyl)lysine from lipoate: step 1/2. It functions in the pathway protein modification; protein lipoylation via exogenous pathway; protein N(6)-(lipoyl)lysine from lipoate: step 2/2. Catalyzes both the ATP-dependent activation of exogenously supplied lipoate to lipoyl-AMP and the transfer of the activated lipoyl onto the lipoyl domains of lipoate-dependent enzymes. The protein is Putative lipoate-protein ligase A (aim22) of Schizosaccharomyces pombe (strain 972 / ATCC 24843) (Fission yeast).